Reading from the N-terminus, the 228-residue chain is Cytidylate kinase (228 aa).

17–25 (GPTASGKGT) provides a ligand contact to ATP.

Belongs to the cytidylate kinase family. Type 1 subfamily.

Its subcellular location is the cytoplasm. The catalysed reaction is CMP + ATP = CDP + ADP. The enzyme catalyses dCMP + ATP = dCDP + ADP. The polypeptide is Cytidylate kinase (Burkholderia cenocepacia (strain HI2424)).